A 179-amino-acid polypeptide reads, in one-letter code: Natural killer cells antigen CD94 (179 aa).

Residues 1-10 (MAVFKTTLWR) lie on the Cytoplasmic side of the membrane. The chain crosses the membrane as a helical; Signal-anchor for type II membrane protein span at residues 11–31 (LISGTLGIICLSLMSTLGILL). The Extracellular segment spans residues 32 to 179 (KNSFTKLSIE…NRYICKQQLI (148 aa)). 2 disulfides stabilise this stretch: Cys58/Cys70 and Cys61/Cys72. The C-type lectin domain occupies 68-175 (YRCNCYFISS…CEDKNRYICK (108 aa)). Residues Asn83 and Asn132 are each glycosylated (N-linked (GlcNAc...) asparagine). 2 disulfides stabilise this stretch: Cys89–Cys174 and Cys152–Cys166.

In terms of assembly, can form disulfide-bonded heterodimer with NKG2 family members KLRC1 and KLRC2. KLRD1-KLRC1 heterodimer interacts with peptide-bound HLA-E-B2M heterotrimeric complex. KLRD1 plays a prominent role in directly interacting with HLA-E. KLRD1-KLRC1 interacts with much higher affinity with peptide-bound HLA-E-B2M than KLRD1-KLRC2. Interacts with the adapter protein TYROBP/DAP12; this interaction is required for cell surface expression and cell activation. As to expression, expressed in NK cell subsets (at protein level). Expressed in memory/effector CD8-positive alpha-beta T cell subsets (at protein level). Expressed in melanoma-specific cytotoxic T cell clones (at protein level). Expressed in terminally differentiated cytotoxic gamma-delta T cells (at protein level). KLRD1-KLRC1 and KLRD1-KLRC2 are differentially expressed in NK and T cell populations, with only minor subsets expressing both receptor complexes (at protein level).

The protein resides in the cell membrane. Immune receptor involved in self-nonself discrimination. In complex with KLRC1 or KLRC2 on cytotoxic and regulatory lymphocyte subsets, recognizes non-classical major histocompatibility (MHC) class Ib molecule HLA-E loaded with self-peptides derived from the signal sequence of classical MHC class Ia and non-classical MHC class Ib molecules. Enables cytotoxic cells to monitor the expression of MHC class I molecules in healthy cells and to tolerate self. Primarily functions as a ligand binding subunit as it lacks the capacity to signal. In terms of biological role, KLRD1-KLRC1 acts as an immune inhibitory receptor. Key inhibitory receptor on natural killer (NK) cells that regulates their activation and effector functions. Dominantly counteracts T cell receptor signaling on a subset of memory/effector CD8-positive T cells as part of an antigen-driven response to avoid autoimmunity. On intraepithelial CD8-positive gamma-delta regulatory T cells triggers TGFB1 secretion, which in turn limits the cytotoxic programming of intraepithelial CD8-positive alpha-beta T cells, distinguishing harmless from pathogenic antigens. In HLA-E-rich tumor microenvironment, acts as an immune inhibitory checkpoint and may contribute to progressive loss of effector functions of NK cells and tumor-specific T cells, a state known as cell exhaustion. Upon HLA-E-peptide binding, transmits intracellular signals through KLRC1 immunoreceptor tyrosine-based inhibition motifs (ITIMs) by recruiting INPP5D/SHIP-1 and INPPL1/SHIP-2 tyrosine phosphatases to ITIMs, and ultimately opposing signals transmitted by activating receptors through dephosphorylation of proximal signaling molecules. Functionally, KLRD1-KLRC2 acts as an immune activating receptor. On cytotoxic lymphocyte subsets recognizes HLA-E loaded with signal sequence-derived peptides from non-classical MHC class Ib HLA-G molecules, likely playing a role in the generation and effector functions of adaptive NK cells and in maternal-fetal tolerance during pregnancy. Regulates the effector functions of terminally differentiated cytotoxic lymphocyte subsets, and in particular may play a role in adaptive NK cell response to viral infection. Upon HLA-E-peptide binding, transmits intracellular signals via the adapter protein TYROBP/DAP12, triggering the phosphorylation of proximal signaling molecules and cell activation. Its function is as follows. (Microbial infection) Viruses like human cytomegalovirus have evolved an escape mechanism whereby virus-induced down-regulation of host MHC class I molecules is coupled to the binding of viral peptides to HLA-E, restoring HLA-E expression and inducing HLA-E-dependent NK cell immune tolerance to infected cells. Recognizes HLA-E in complex with human cytomegalovirus UL40-derived peptide (VMAPRTLIL) and inhibits NK cell cytotoxicity. (Microbial infection) May recognize HLA-E in complex with HIV-1 gag/Capsid protein p24-derived peptide (AISPRTLNA) on infected cells and may inhibit NK cell cytotoxicity, a mechanism that allows HIV-1 to escape immune recognition. In terms of biological role, (Microbial infection) Upon SARS-CoV-2 infection, may contribute to functional exhaustion of cytotoxic NK cells and CD8-positive T cells. On NK cells, may recognize HLA-E in complex with SARS-CoV-2 S/Spike protein S1-derived peptide (LQPRTFLL) expressed on the surface of lung epithelial cells, inducing NK cell exhaustion and dampening antiviral immune surveillance. The sequence is that of Natural killer cells antigen CD94 (KLRD1) from Homo sapiens (Human).